The primary structure comprises 303 residues: Foldase protein PrsA (303 aa).

An N-terminal signal peptide occupies residues 1 to 20 (MMKKWLLAAASLLMVVTLAG). A lipid anchor (N-palmitoyl cysteine) is attached at C21. A lipid anchor (S-diacylglycerol cysteine) is attached at C21. The region spanning 137–233 (EPKVEVQHIL…YGYHVIRMIK (97 aa)) is the PpiC domain.

It belongs to the PrsA family.

It is found in the cell membrane. It catalyses the reaction [protein]-peptidylproline (omega=180) = [protein]-peptidylproline (omega=0). Its function is as follows. Plays a major role in protein secretion by helping the post-translocational extracellular folding of several secreted proteins. In Latilactobacillus sakei subsp. sakei (strain 23K) (Lactobacillus sakei subsp. sakei), this protein is Foldase protein PrsA.